Here is a 245-residue protein sequence, read N- to C-terminus: Isopentenyl phosphate kinase (245 aa).

Residue 5–9 (KIGGS) participates in ATP binding. A substrate-binding site is contributed by G45. G46 serves as a coordination point for ATP. Substrate contacts are provided by H50 and G143. Residues D164, 169-174 (YSKDPK), G201, and K205 each bind ATP.

The protein belongs to the isopentenyl phosphate kinase family. In terms of assembly, homodimer.

The enzyme catalyses isopentenyl phosphate + ATP = isopentenyl diphosphate + ADP. In terms of biological role, catalyzes the formation of isopentenyl diphosphate (IPP), the building block of all isoprenoids. Has lower activity with isopentenyl thiolophosphate (ISP). Has low activity with dimethylallyl phosphate (DMAP), 1-butyl phosphate (BP) and 3-buten-1-yl phosphate (BEP). Has no significant activity with geranyl phosphate (in vitro). The polypeptide is Isopentenyl phosphate kinase (Thermoplasma acidophilum (strain ATCC 25905 / DSM 1728 / JCM 9062 / NBRC 15155 / AMRC-C165)).